The sequence spans 1274 residues: Protein ECM30 (1274 aa).

Disordered stretches follow at residues 23–42, 405–439, and 494–517; these read EDAD…SLSV, RRAV…QTKP, and SSSS…DTSN. Composition is skewed to low complexity over residues 27 to 42, 409 to 432, and 494 to 515; these read ASSP…SLSV, STSS…AAYH, and SSSS…SNDT. Ser-635 bears the Phosphoserine mark. Over residues 803–822 the composition is skewed to low complexity; it reads NQQHQNQQQGQNDNRGQNQN. Residues 803–842 form a disordered region; that stretch reads NQQHQNQQQGQNDNRGQNQNEDPGQENESPTPYLLFNPAS. Ser-1065 is modified (phosphoserine). Residues 1100-1149 are disordered; sequence HLRSSSSSSSITLEKTTSNSSSIRTRPNSHHVAPETNNNNSTNGNSNNSS. The segment covering 1110-1125 has biased composition (polar residues); sequence ITLEKTTSNSSSIRTR. The segment covering 1135–1149 has biased composition (low complexity); sequence TNNNNSTNGNSNNSS.

It is found in the cytoplasm. In terms of biological role, seems to be involved in cell wall organization and biogenesis. The protein is Protein ECM30 (ECM30) of Saccharomyces cerevisiae (strain ATCC 204508 / S288c) (Baker's yeast).